Consider the following 161-residue polypeptide: Putative defense protein 2 (161 aa).

Positions 1-11 (LSWSALALTSA) are cleaved as a signal peptide. Residues 12 to 161 (YPTGAPTSAC…SAPVKILSHH (150 aa)) enclose the Reelin domain. The cysteines at positions 21 and 98 are disulfide-linked. N-linked (GlcNAc...) asparagine glycosylation occurs at N91.

Belongs to the insect defense protein family.

Its subcellular location is the secreted. Its function is as follows. May have antimicrobial activity. The chain is Putative defense protein 2 from Antheraea mylitta (Tasar silkworm).